A 273-amino-acid chain; its full sequence is Zinc finger protein 80 (273 aa).

7 consecutive C2H2-type zinc fingers follow at residues 49 to 71 (YKCK…QQIH), 77 to 99 (YECQ…VRIH), 103 to 127 (KPCK…HQIH), 133 to 155 (YECS…RMTH), 161 to 183 (FGCK…MKIH), 189 to 211 (YKCS…SMTH), and 217 to 239 (YECK…TRSH).

Belongs to the krueppel C2H2-type zinc-finger protein family.

It is found in the nucleus. Functionally, may be involved in transcriptional regulation. The sequence is that of Zinc finger protein 80 (ZNF80) from Pongo pygmaeus (Bornean orangutan).